The primary structure comprises 122 residues: Secreted RxLR effector protein 80 (122 aa).

The N-terminal stretch at 1 to 21 (MKKRALPIVIFVISLQQSSQS) is a signal peptide. The RxLR signature appears at 72–75 (RSLR).

The protein belongs to the RxLR effector family.

Its subcellular location is the secreted. The protein localises to the host endoplasmic reticulum membrane. Functionally, secreted effector that dos not suppress the host cell death induced by cell death-inducing proteins. The polypeptide is Secreted RxLR effector protein 80 (Plasmopara viticola (Downy mildew of grapevine)).